The sequence spans 436 residues: Enolase (436 aa).

Gln-167 is a binding site for (2R)-2-phosphoglycerate. Glu-209 (proton donor) is an active-site residue. Asp-246, Glu-291, and Asp-318 together coordinate Mg(2+). (2R)-2-phosphoglycerate is bound by residues Lys-343, Arg-372, Ser-373, and Lys-394. Lys-343 acts as the Proton acceptor in catalysis.

Belongs to the enolase family. Component of the RNA degradosome, a multiprotein complex involved in RNA processing and mRNA degradation. The cofactor is Mg(2+).

The protein localises to the cytoplasm. Its subcellular location is the secreted. It localises to the cell surface. It catalyses the reaction (2R)-2-phosphoglycerate = phosphoenolpyruvate + H2O. It functions in the pathway carbohydrate degradation; glycolysis; pyruvate from D-glyceraldehyde 3-phosphate: step 4/5. Its function is as follows. Catalyzes the reversible conversion of 2-phosphoglycerate (2-PG) into phosphoenolpyruvate (PEP). It is essential for the degradation of carbohydrates via glycolysis. In Haemophilus influenzae (strain ATCC 51907 / DSM 11121 / KW20 / Rd), this protein is Enolase.